The chain runs to 840 residues: Sorting nexin-25 (840 aa).

In terms of domain architecture, PXA spans 1-164 (MDKALKEVFD…MLLAQLAYRE (164 aa)). One can recognise an RGS domain in the interval 287 to 401 (QFEDILANTF…IVSDLYEKLL (115 aa)). Positions 434–499 (TNQINEQASF…RTDLQLHMAR (66 aa)) form a coiled coil. Positions 508–628 (GMWKASITSG…AFLSPSPDYL (121 aa)) constitute a PX domain. Phosphoserine is present on Ser665.

This sequence belongs to the sorting nexin family.

Its subcellular location is the endosome membrane. May be involved in several stages of intracellular trafficking. The chain is Sorting nexin-25 (SNX25) from Homo sapiens (Human).